We begin with the raw amino-acid sequence, 464 residues long: Protein FAM90A14 (464 aa).

3 disordered regions span residues 1 to 42 (MMAR…DPRL), 70 to 389 (PATL…HDGA), and 411 to 437 (APSF…SEAP). 2 stretches are compositionally biased toward basic and acidic residues: residues 74–89 (GKKE…KPRV) and 97–114 (NKDK…DPQR). Over residues 180-197 (LASLSPLRKASLSSSSSL) the composition is skewed to low complexity.

The protein belongs to the FAM90 family.

In Homo sapiens (Human), this protein is Protein FAM90A14.